We begin with the raw amino-acid sequence, 487 residues long: Glutamate--tRNA ligase (487 aa).

The short motif at P13 to G23 is the 'HIGH' region element. Residues K255–R259 carry the 'KMSKS' region motif. Residue K258 participates in ATP binding.

This sequence belongs to the class-I aminoacyl-tRNA synthetase family. Glutamate--tRNA ligase type 1 subfamily. As to quaternary structure, monomer.

The protein localises to the cytoplasm. The enzyme catalyses tRNA(Glu) + L-glutamate + ATP = L-glutamyl-tRNA(Glu) + AMP + diphosphate. Functionally, catalyzes the attachment of glutamate to tRNA(Glu) in a two-step reaction: glutamate is first activated by ATP to form Glu-AMP and then transferred to the acceptor end of tRNA(Glu). This is Glutamate--tRNA ligase from Malacoplasma penetrans (strain HF-2) (Mycoplasma penetrans).